The following is a 582-amino-acid chain: Actin-histidine N-methyltransferase (582 aa).

S-adenosyl-L-methionine-binding positions include Arg-75, 104–106 (EGF), Arg-254, 275–279 (DMCNH), and 325–327 (NGF). The SET domain maps to 94–314 (DGFELVEFPE…SGEQIYIFYG (221 aa)). The tract at residues 550-582 (DKDLLPNGTKSENDSFLAEDNQQETGNAKDFCS) is disordered.

It belongs to the class V-like SAM-binding methyltransferase superfamily. SETD3 actin-histidine methyltransferase family.

The protein localises to the cytoplasm. The enzyme catalyses L-histidyl-[protein] + S-adenosyl-L-methionine = N(tele)-methyl-L-histidyl-[protein] + S-adenosyl-L-homocysteine + H(+). Its function is as follows. Protein-histidine N-methyltransferase that specifically mediates 3-methylhistidine (tele-methylhistidine) methylation of actin at 'His-73'. Does not have protein-lysine N-methyltransferase activity and probably only catalyzes histidine methylation of actin. The polypeptide is Actin-histidine N-methyltransferase (Xenopus tropicalis (Western clawed frog)).